A 493-amino-acid chain; its full sequence is Membrane-bound lytic murein transglycosylase F (493 aa).

The signal sequence occupies residues 1–21 (MKRLRFNYLLIGLITVLLALA). Positions 22 to 268 (LWPSIPWYGG…RLDEKYLGHV (247 aa)) are non-LT domain. The interval 269-493 (GTFDYVDTRT…LNPVSALPLP (225 aa)) is LT domain. The active site involves Glu313.

It in the N-terminal section; belongs to the bacterial solute-binding protein 3 family. This sequence in the C-terminal section; belongs to the transglycosylase Slt family.

It is found in the cell outer membrane. It carries out the reaction Exolytic cleavage of the (1-&gt;4)-beta-glycosidic linkage between N-acetylmuramic acid (MurNAc) and N-acetylglucosamine (GlcNAc) residues in peptidoglycan, from either the reducing or the non-reducing ends of the peptidoglycan chains, with concomitant formation of a 1,6-anhydrobond in the MurNAc residue.. In terms of biological role, murein-degrading enzyme that degrades murein glycan strands and insoluble, high-molecular weight murein sacculi, with the concomitant formation of a 1,6-anhydromuramoyl product. Lytic transglycosylases (LTs) play an integral role in the metabolism of the peptidoglycan (PG) sacculus. Their lytic action creates space within the PG sacculus to allow for its expansion as well as for the insertion of various structures such as secretion systems and flagella. This chain is Membrane-bound lytic murein transglycosylase F, found in Erwinia tasmaniensis (strain DSM 17950 / CFBP 7177 / CIP 109463 / NCPPB 4357 / Et1/99).